A 496-amino-acid polypeptide reads, in one-letter code: FAD-linked oxidoreductase AFUA_1G00980 (496 aa).

The signal sequence occupies residues 1–21 (MRRATLIPLAIWVAGAAAAAA). Residues Asn-49, Asn-122, Asn-205, Asn-258, Asn-344, Asn-351, Asn-371, and Asn-382 are each glycosylated (N-linked (GlcNAc...) asparagine). The FAD-binding PCMH-type domain occupies 64–243 (MAPTYAVSVR…VEAVYQVTDL (180 aa)).

This sequence belongs to the oxygen-dependent FAD-linked oxidoreductase family. The cofactor is FAD.

Its function is as follows. FAD-linked oxidoreductase; part of the gene cluster that mediates the biosynthesis of fumigermin that inhibits germination of spores of the inducing S.rapamycinicus, and thus helps the fungus to defend resources in the shared habitat against a bacterial competitor. The partially reducing polyketide synthase fngA alone is sufficient for the production of fumigermin. FgnA catalyzes the condensation of 3 malonyl-CoA units to an acetyl-CoA starter, and 3 methylations to yield fumigermin. It is remarkable that the five cluster genes including fgnA are conserved in distantly related fungi, supporting the assumption of a fumigermin cluster; it is thus possible that originally all five genes were functional, but that the genes encoding tailoring enzymes became inactive from mutations, similar to the case of the fgnA gene in strains A1163 and Af293. The protein is FAD-linked oxidoreductase AFUA_1G00980 of Aspergillus fumigatus (strain ATCC MYA-4609 / CBS 101355 / FGSC A1100 / Af293) (Neosartorya fumigata).